Here is a 347-residue protein sequence, read N- to C-terminus: NADH-ubiquinone oxidoreductase chain 2 (347 aa).

11 helical membrane-spanning segments follow: residues 1–21 (MNPL…MIVM), 25–45 (HWLT…PILM), 59–79 (YFLT…INLL), 96–116 (IIMT…FWVP), 122–142 (IQLS…MSIL), 145–165 (IFPT…VAIG), 178–198 (IMAY…AYNP), 201–221 (TLLN…MFML), 237–257 (APLL…LPPL), 276–296 (IITP…YMRL), and 326–346 (VSPL…LMLL).

It belongs to the complex I subunit 2 family. Core subunit of respiratory chain NADH dehydrogenase (Complex I) which is composed of 45 different subunits. Interacts with TMEM242.

The protein localises to the mitochondrion inner membrane. It catalyses the reaction a ubiquinone + NADH + 5 H(+)(in) = a ubiquinol + NAD(+) + 4 H(+)(out). In terms of biological role, core subunit of the mitochondrial membrane respiratory chain NADH dehydrogenase (Complex I) which catalyzes electron transfer from NADH through the respiratory chain, using ubiquinone as an electron acceptor. Essential for the catalytic activity and assembly of complex I. This is NADH-ubiquinone oxidoreductase chain 2 from Boneia bidens (Manado fruit bat).